A 356-amino-acid chain; its full sequence is Arginine kinase Lit v 2 (356 aa).

Positions Lys9 to Val91 constitute a Phosphagen kinase N-terminal domain. Residue Gly64–Tyr68 participates in L-arginine binding. The Phosphagen kinase C-terminal domain maps to Phe119 to Met356. Residues Ser122 to Arg126 and His185 contribute to the ATP site. Residue Glu225 coordinates L-arginine. Arg229 serves as a coordination point for ATP. Residue Cys271 coordinates L-arginine. ATP contacts are provided by residues Arg280–His284 and Arg309–Glu314. Residue Glu314 coordinates L-arginine.

Belongs to the ATP:guanido phosphotransferase family. In terms of tissue distribution, expressed in muscle (at protein level). Expressed in muscle, heart, nerve, stomach and hemocytes, with the highest expression in muscle. Very low expression in eyestalk and intestine. Not expressed in hepatopancreas, gill and skin.

The catalysed reaction is L-arginine + ATP = N(omega)-phospho-L-arginine + ADP + H(+). With respect to regulation, no change in activity after supplementation with 10 mM glucose. However, activity decreases significantly when glucose concentration is higher than 50 mM and almost all activity is lost with 200 mM glucose. Activity is significantly increased after treatment with 10 mM and 50 mM ATP. However, activity drops significantly with 200 mM ATP. Inhibited by 10-200 mM alpha-ketoglutarate. No change in activity after incubation with 10-200 mM L-citrulline, L-ornaline or glycerol. In terms of biological role, catalyzes the reversible transfer of high energy ATP gamma-phosphate group to L-arginine. The chain is Arginine kinase Lit v 2 from Penaeus vannamei (Whiteleg shrimp).